Here is a 414-residue protein sequence, read N- to C-terminus: Serine hydroxymethyltransferase (414 aa).

Residues Leu-121 and 125–127 contribute to the (6S)-5,6,7,8-tetrahydrofolate site; that span reads GHL. The residue at position 229 (Lys-229) is an N6-(pyridoxal phosphate)lysine.

This sequence belongs to the SHMT family. Homodimer. It depends on pyridoxal 5'-phosphate as a cofactor.

The protein localises to the cytoplasm. The catalysed reaction is (6R)-5,10-methylene-5,6,7,8-tetrahydrofolate + glycine + H2O = (6S)-5,6,7,8-tetrahydrofolate + L-serine. The protein operates within one-carbon metabolism; tetrahydrofolate interconversion. It functions in the pathway amino-acid biosynthesis; glycine biosynthesis; glycine from L-serine: step 1/1. Its function is as follows. Catalyzes the reversible interconversion of serine and glycine with tetrahydrofolate (THF) serving as the one-carbon carrier. This reaction serves as the major source of one-carbon groups required for the biosynthesis of purines, thymidylate, methionine, and other important biomolecules. Also exhibits THF-independent aldolase activity toward beta-hydroxyamino acids, producing glycine and aldehydes, via a retro-aldol mechanism. This chain is Serine hydroxymethyltransferase, found in Polynucleobacter necessarius subsp. necessarius (strain STIR1).